Consider the following 452-residue polypeptide: Tissue alpha-L-fucosidase (452 aa).

Residues 1–17 form the signal peptide; it reads MLLLLLLLLVAAAQAVA. Residues asparagine 227, asparagine 254, asparagine 368, and asparagine 378 are each glycosylated (N-linked (GlcNAc...) asparagine).

The protein belongs to the glycosyl hydrolase 29 family. In terms of assembly, homotetramer.

The protein resides in the lysosome. The catalysed reaction is an alpha-L-fucoside + H2O = L-fucose + an alcohol. The enzyme catalyses a neolactoside IV(2)-alpha-Fuc-nLc4Cer(d18:1(4E)) + H2O = a neolactoside nLc4Cer(d18:1(4E)) + L-fucose. It catalyses the reaction a neolactoside IV(2)-alpha-Fuc-nLc4Cer(d18:0) + H2O = a neolactoside nLc4Cer(d18:0) + L-fucose. Its function is as follows. Alpha-L-fucosidase is responsible for hydrolyzing the alpha-1,6-linked fucose joined to the reducing-end N-acetylglucosamine of the carbohydrate moieties of glycoproteins. This is Tissue alpha-L-fucosidase (Fuca1) from Mus musculus (Mouse).